We begin with the raw amino-acid sequence, 257 residues long: MSLLSKTRELNTLLQKHKGIAVDFKDVAQTISNVTVTNVFIVSRRGKILGSCLNELLKSERIKDMLEDRHIPREYTEELMNVKQTESNIDIDNELTVFPPENREVFLNSRTTIFPILGGGERLGTLVLGRVQDDFNENDLVLGEYAATVIGMEILREKHNEVEKEARDKAAITMAINSLSYSEKEAIEHIFEELGGTEGLLIASKVADRVGITRSVIVNALRKLESAGVIESRSLGMKGTFIKVKKDKFLDELEKNK.

Residues 1 to 155 are GAF domain; the sequence is MSLLSKTREL…AATVIGMEIL (155 aa). Residues 203–222 constitute a DNA-binding region (H-T-H motif); the sequence is ASKVADRVGITRSVIVNALR.

Belongs to the CodY family.

It is found in the cytoplasm. In terms of biological role, DNA-binding global transcriptional regulator which is involved in the adaptive response to starvation and acts by directly or indirectly controlling the expression of numerous genes in response to nutrient availability. During rapid exponential growth, CodY is highly active and represses genes whose products allow adaptation to nutrient depletion. The protein is Global transcriptional regulator CodY of Staphylococcus epidermidis (strain ATCC 12228 / FDA PCI 1200).